The sequence spans 485 residues: Cobyric acid synthase (485 aa).

Residues 248-435 form the GATase cobBQ-type domain; it reads RLKVAVAVPP…LHGLFESPAA (188 aa). Cys329 functions as the Nucleophile in the catalytic mechanism. Residue His427 is part of the active site.

It belongs to the CobB/CobQ family. CobQ subfamily.

It participates in cofactor biosynthesis; adenosylcobalamin biosynthesis. Catalyzes amidations at positions B, D, E, and G on adenosylcobyrinic A,C-diamide. NH(2) groups are provided by glutamine, and one molecule of ATP is hydrogenolyzed for each amidation. The polypeptide is Cobyric acid synthase (Azotobacter vinelandii (strain DJ / ATCC BAA-1303)).